The chain runs to 261 residues: Cytochrome c oxidase subunit 3 (261 aa).

The Mitochondrial matrix segment spans residues 1-15 (MTHQTHAYHMVNPSP). The helical transmembrane segment at 16 to 34 (WPLTGALSALLMTFGLIMW) threads the bilayer. Topologically, residues 35-40 (FHFNST) are mitochondrial intermembrane. Residues 41 to 66 (ALLMLGLTTNMLTMYQWWRDIIREST) traverse the membrane as a helical segment. The Mitochondrial matrix portion of the chain corresponds to 67-72 (FQGHHT). The chain crosses the membrane as a helical span at residues 73–105 (PVVQKGLRYGMILFIISEVLFFTGFFWAFYHSS). At 106–128 (LAPTPELGGCWPPTGIHPLNPLE) the chain is on the mitochondrial intermembrane side. Residues 129 to 152 (VPLLNTSVLLASGVSITWAHHSLM) form a helical membrane-spanning segment. Residues 153-155 (EGH) lie on the Mitochondrial matrix side of the membrane. Residues 156–183 (RNHMLQALFITIALGVYFTLLQASEYYE) form a helical membrane-spanning segment. Residues 184-190 (APFTISD) are Mitochondrial intermembrane-facing. A helical transmembrane segment spans residues 191 to 223 (GVYGSTFFVATGFHGLHVIIGSTFLIVCFFRQL). Over 224–232 (KFHFTSSHH) the chain is Mitochondrial matrix. A helical transmembrane segment spans residues 233–256 (FGFEAAAWYWHFVDVVWLFLYVSI). Residues 257–261 (YWWGS) lie on the Mitochondrial intermembrane side of the membrane.

The protein belongs to the cytochrome c oxidase subunit 3 family. As to quaternary structure, component of the cytochrome c oxidase (complex IV, CIV), a multisubunit enzyme composed of 14 subunits. The complex is composed of a catalytic core of 3 subunits MT-CO1, MT-CO2 and MT-CO3, encoded in the mitochondrial DNA, and 11 supernumerary subunits COX4I, COX5A, COX5B, COX6A, COX6B, COX6C, COX7A, COX7B, COX7C, COX8 and NDUFA4, which are encoded in the nuclear genome. The complex exists as a monomer or a dimer and forms supercomplexes (SCs) in the inner mitochondrial membrane with NADH-ubiquinone oxidoreductase (complex I, CI) and ubiquinol-cytochrome c oxidoreductase (cytochrome b-c1 complex, complex III, CIII), resulting in different assemblies (supercomplex SCI(1)III(2)IV(1) and megacomplex MCI(2)III(2)IV(2)).

Its subcellular location is the mitochondrion inner membrane. It carries out the reaction 4 Fe(II)-[cytochrome c] + O2 + 8 H(+)(in) = 4 Fe(III)-[cytochrome c] + 2 H2O + 4 H(+)(out). Component of the cytochrome c oxidase, the last enzyme in the mitochondrial electron transport chain which drives oxidative phosphorylation. The respiratory chain contains 3 multisubunit complexes succinate dehydrogenase (complex II, CII), ubiquinol-cytochrome c oxidoreductase (cytochrome b-c1 complex, complex III, CIII) and cytochrome c oxidase (complex IV, CIV), that cooperate to transfer electrons derived from NADH and succinate to molecular oxygen, creating an electrochemical gradient over the inner membrane that drives transmembrane transport and the ATP synthase. Cytochrome c oxidase is the component of the respiratory chain that catalyzes the reduction of oxygen to water. Electrons originating from reduced cytochrome c in the intermembrane space (IMS) are transferred via the dinuclear copper A center (CU(A)) of subunit 2 and heme A of subunit 1 to the active site in subunit 1, a binuclear center (BNC) formed by heme A3 and copper B (CU(B)). The BNC reduces molecular oxygen to 2 water molecules using 4 electrons from cytochrome c in the IMS and 4 protons from the mitochondrial matrix. The chain is Cytochrome c oxidase subunit 3 (MT-CO3) from Tragelaphus oryx (Eland).